We begin with the raw amino-acid sequence, 388 residues long: Succinate--CoA ligase [ADP-forming] subunit beta (388 aa).

The 236-residue stretch at 9–244 (KQLFAEYGLP…PSQDDAREAH (236 aa)) folds into the ATP-grasp domain. ATP is bound by residues lysine 46, 53-55 (GRG), glutamate 99, threonine 102, and glutamate 107. Asparagine 199 and aspartate 213 together coordinate Mg(2+). Substrate is bound by residues asparagine 264 and 321 to 323 (GIV).

Belongs to the succinate/malate CoA ligase beta subunit family. As to quaternary structure, heterotetramer of two alpha and two beta subunits. The cofactor is Mg(2+).

The enzyme catalyses succinate + ATP + CoA = succinyl-CoA + ADP + phosphate. The catalysed reaction is GTP + succinate + CoA = succinyl-CoA + GDP + phosphate. Its pathway is carbohydrate metabolism; tricarboxylic acid cycle; succinate from succinyl-CoA (ligase route): step 1/1. Succinyl-CoA synthetase functions in the citric acid cycle (TCA), coupling the hydrolysis of succinyl-CoA to the synthesis of either ATP or GTP and thus represents the only step of substrate-level phosphorylation in the TCA. The beta subunit provides nucleotide specificity of the enzyme and binds the substrate succinate, while the binding sites for coenzyme A and phosphate are found in the alpha subunit. This is Succinate--CoA ligase [ADP-forming] subunit beta from Pseudomonas entomophila (strain L48).